Reading from the N-terminus, the 572-residue chain is [Pyruvate dehydrogenase [acetyl-transferring]]-phosphatase 1, mitochondrial (572 aa).

Residues 95–122 (NTSGNINMPSPNPKGTETQKSQRSQNDQ) form a disordered region. Residues 153-543 (RYDVAQLPSN…DDLTVTVAFF (391 aa)) enclose the PPM-type phosphatase domain. Positions 197, 198, 424, and 480 each coordinate Mn(2+). Over residues 470 to 480 (EAQRPAFRYKD) the composition is skewed to basic and acidic residues. Residues 470–492 (EAQRPAFRYKDNNSSSPSGSNPE) are disordered. The segment covering 481–491 (NNSSSPSGSNP) has biased composition (low complexity).

The protein belongs to the PP2C family. The cofactor is Mg(2+). Mn(2+) is required as a cofactor. Post-translationally, processed by mitochondrial inner membrane protease (IMP) complex and released to the intermembrane space.

The protein resides in the mitochondrion intermembrane space. The catalysed reaction is O-phospho-L-seryl-[pyruvate dehydrogenase E1 alpha subunit] + H2O = L-seryl-[pyruvate dehydrogenase E1 alpha subunit] + phosphate. Catalyzes the dephosphorylation and concomitant reactivation of the E1 alpha subunit (PDA1) of the pyruvate dehydrogenase complex. The protein is [Pyruvate dehydrogenase [acetyl-transferring]]-phosphatase 1, mitochondrial (PTC5) of Saccharomyces cerevisiae (strain ATCC 204508 / S288c) (Baker's yeast).